The following is a 346-amino-acid chain: Hydroxymethylglutaryl-CoA synthase (346 aa).

(3S)-3-hydroxy-3-methylglutaryl-CoA is bound at residue Asp28. The active-site Proton donor/acceptor is Glu80. Positions 112 and 153 each coordinate (3S)-3-hydroxy-3-methylglutaryl-CoA. The active-site Acyl-thioester intermediate is Cys112. CoA is bound at residue Arg199. (3S)-3-hydroxy-3-methylglutaryl-CoA-binding residues include Thr201 and His234. The Proton donor/acceptor role is filled by His234. Residue Lys239 participates in CoA binding. 3 residues coordinate (3S)-3-hydroxy-3-methylglutaryl-CoA: Arg243, Asn266, and Ser296.

This sequence belongs to the thiolase-like superfamily. Archaeal HMG-CoA synthase family. In terms of assembly, interacts with acetoacetyl-CoA thiolase that catalyzes the precedent step in the pathway and with a DUF35 protein. The acetoacetyl-CoA thiolase/HMG-CoA synthase complex channels the intermediate via a fused CoA-binding site, which allows for efficient coupling of the endergonic thiolase reaction with the exergonic HMGCS reaction.

The enzyme catalyses acetoacetyl-CoA + acetyl-CoA + H2O = (3S)-3-hydroxy-3-methylglutaryl-CoA + CoA + H(+). Its pathway is metabolic intermediate biosynthesis; (R)-mevalonate biosynthesis; (R)-mevalonate from acetyl-CoA: step 2/3. Its function is as follows. Catalyzes the condensation of acetyl-CoA with acetoacetyl-CoA to form 3-hydroxy-3-methylglutaryl-CoA (HMG-CoA). Functions in the mevalonate (MVA) pathway leading to isopentenyl diphosphate (IPP), a key precursor for the biosynthesis of isoprenoid compounds that are building blocks of archaeal membrane lipids. The polypeptide is Hydroxymethylglutaryl-CoA synthase (Methanosphaera stadtmanae (strain ATCC 43021 / DSM 3091 / JCM 11832 / MCB-3)).